Consider the following 287-residue polypeptide: uncharacterized protein (287 aa).

Residues 183–281 form the HTH araC/xylS-type domain; that stretch reads WEAARYLQEH…GISPIEYRKI (99 aa). DNA-binding regions (H-T-H motif) lie at residues 200–221 and 248–271; these read KDLS…QQVL and MGVI…KQIE.

This is an uncharacterized protein from Bacillus subtilis (strain 168).